An 888-amino-acid polypeptide reads, in one-letter code: Pumilio homology domain family member 4 (888 aa).

Phosphothreonine is present on residues Thr-205, Thr-212, and Thr-252. Disordered stretches follow at residues 236–270 (KAKK…IPPT) and 467–551 (MNSA…RKIE). The span at 243-270 (GANNTAKTRTQSISFDNTPSSTSFIPPT) shows a compositional bias: polar residues. At Ser-256 the chain carries Phosphoserine. 2 stretches are compositionally biased toward low complexity: residues 478-499 (NNNS…YNNK) and 521-543 (NNNN…NSNS). The region spanning 539-888 (TNSNSAEKQR…RIIGMLHLDS (350 aa)) is the PUM-HD domain. Pumilio repeat units follow at residues 563-598 (QYIG…AIFE), 599-634 (ETKD…VLTK), 635-671 (ISSP…IVVD), 672-707 (SLRP…FIFD), 708-743 (AISD…NLCD), 744-783 (KLLA…KIVH), 784-821 (LLKP…EILN), and 823-861 (GGET…RLSE).

Functionally, is not essential for haploid growth, but may affect diploid formation. The polypeptide is Pumilio homology domain family member 4 (PUF4) (Saccharomyces cerevisiae (strain ATCC 204508 / S288c) (Baker's yeast)).